The following is a 238-amino-acid chain: MGSTSGIGLIPNNRTARNLLQLLNHPTIEKRLINKDYEAVGMIPVGTANMVMKTKKISKVAQLRGQRIGVLANNPPQQALVRSVGAQPVYVDLSNAIAQFQQNKIDIMPAPVYGLLPYNLQKDFGPDTQVINFPLAYFGVNIIIKPQAYPANFGRKIRAWFVQNSQLLTNRAIQWENHLPAYYWVDVSFYEKQSYDIMVAKIRNQYVRSGYYDAYFVELMKRLRCIDDPRYFECPMSR.

It belongs to the bacterial solute-binding protein 7 family.

In terms of biological role, mediates antimicrobial resistance via active efflux. Contributes to resistance to antibiotics such as chloramphenicol, erythromycin and novobiocin. May be part of a tripartite ATP-independent periplasmic (TRAP) transport system. The sequence is that of Probable solute-binding protein AdeT2 from Acinetobacter baumannii.